A 5571-amino-acid polypeptide reads, in one-letter code: Polyketide synthase GfsB (5571 aa).

Residues 1–27 are disordered; sequence MSVPPPGATPSRTSRTKGLKDRPRMEN. Positions 18-27 are enriched in basic and acidic residues; the sequence is GLKDRPRMEN. A Ketosynthase family 3 (KS3) 1 domain is found at 57-483; sequence QEPVAIIGMS…GTNAHVIIEQ (427 aa). 3 module regions span residues 57–2148, 2167–3728, and 3746–5485; these read QEPV…RDTL, DEPL…GSQV, and DEPV…HTHL. Catalysis depends on for beta-ketoacyl synthase 1 activity residues cysteine 230, histidine 365, and histidine 405. Positions 485–518 are disordered; sequence PAIEGTGLGDDAPPTAEHPEERTPADGGPAPQPV. The region spanning 611 to 926 is the Malonyl-CoA:ACP transacylase (MAT) 1 domain; that stretch reads FVFPGQGSQW…LRSLAEAYAH (316 aa). The segment at 976–1109 is N-terminal hotdog fold 1; the sequence is HPLLAAATSL…GYLAVGAHEP (134 aa). Positions 976–1264 constitute a PKS/mFAS DH 1 domain; it reads HPLLAAATSL…LRPLATNQAP (289 aa). The active-site Proton acceptor; for dehydratase activity 1 is histidine 1008. The tract at residues 1122–1264 is C-terminal hotdog fold 1; that stretch reads ATPLDVTDLY…LRPLATNQAP (143 aa). Aspartate 1183 functions as the Proton donor; for dehydratase activity 1 in the catalytic mechanism. Positions 1478-1777 constitute an Enoyl reductase (ER) domain; the sequence is GTLDHLTLIP…QARHIGKIVL (300 aa). The 180-residue stretch at 1787 to 1966 folds into the Ketoreductase (KR) 1 domain; sequence GTVLVTGATG…TSLAWGLWEE (180 aa). In terms of domain architecture, Carrier 1 spans 2073–2148; the sequence is RIVNDLVRDH…ELAAHLRDTL (76 aa). Serine 2108 is subject to O-(pantetheine 4'-phosphoryl)serine. The 427-residue stretch at 2167–2593 folds into the Ketosynthase family 3 (KS3) 2 domain; the sequence is DEPLAVVAMS…GTNAHVILEQ (427 aa). Active-site for beta-ketoacyl synthase 2 activity residues include cysteine 2340, histidine 2475, and histidine 2515. Residues 2710-3016 enclose the Malonyl-CoA:ACP transacylase (MAT) 2 domain; that stretch reads VFSGQGSQRP…AAVALQRGNR (307 aa). A Ketoreductase (KR) 2 domain is found at 3373-3551; that stretch reads GTVLVTGGTG…VSVAWGPWAE (179 aa). In terms of domain architecture, Carrier 2 spans 3653 to 3728; it reads TALLDLVRGQ…ALAEYVGSQV (76 aa). Serine 3688 carries the O-(pantetheine 4'-phosphoryl)serine modification. The Ketosynthase family 3 (KS3) 3 domain occupies 3746-4172; it reads DEPVAIIGMS…GTNAHVILEQ (427 aa). Catalysis depends on for beta-ketoacyl synthase 3 activity residues cysteine 3919, histidine 4054, and histidine 4094. Residues 4279-4601 enclose the Malonyl-CoA:ACP transacylase (MAT) 3 domain; that stretch reads FLFSGQGSQR…ATAHVNGVQP (323 aa). Residues 4649 to 4774 form an N-terminal hotdog fold 2 region; sequence HPLLAGVVDL…GALTVAEAVD (126 aa). The 283-residue stretch at 4649-4931 folds into the PKS/mFAS DH 2 domain; it reads HPLLAGVVDL…TRPIAAGQLA (283 aa). The active-site Proton acceptor; for dehydratase activity 2 is the histidine 4681. A C-terminal hotdog fold 2 region spans residues 4787 to 4931; it reads AIEVELDDPY…TRPIAAGQLA (145 aa). Residue aspartate 4848 is the Proton donor; for dehydratase activity 2 of the active site. Positions 5134 to 5306 constitute a Ketoreductase (KR) 3 domain; the sequence is LLVTGASGVL…TSLSWGLWAE (173 aa). The 76-residue stretch at 5410–5485 folds into the Carrier 3 domain; sequence RMVLDLVRDR…ALARYLHTHL (76 aa). Position 5445 is an O-(pantetheine 4'-phosphoryl)serine (serine 5445).

Pantetheine 4'-phosphate is required as a cofactor.

It participates in antibiotic biosynthesis. Functionally, second protein in the synthesis of the 16-membered macrolide antibiotics FD-891 and FD-892. Composed of 3 modules. Modifies the product of GfsA by multiple rounds of addition of malonyl-CoA or methylmalonyl-CoA and other modifications to help generate the final products. The chain is Polyketide synthase GfsB from Streptomyces halstedii.